The following is a 1012-amino-acid chain: 5'-3' exoribonuclease 2 (1012 aa).

The CCHC-type zinc finger occupies 264–281 (GKCFLCGQEGHRAADCEG). Disordered regions lie at residues 411-439 (VQQR…AQAS), 888-976 (TFKD…QRQV), and 990-1012 (QRKK…PKTA). Basic and acidic residues predominate over residues 415 to 433 (QSERFRRDKARDKARDNAR). Residues 904–914 (ITPKKMNSPQR) show a composition bias toward polar residues. Basic and acidic residues-rich tracts occupy residues 918–928 (WKKDETPQSRE) and 950–962 (PQRE…KKEN). The span at 990–1002 (QRKKEKYLRKKAK) shows a compositional bias: basic residues.

It belongs to the 5'-3' exonuclease family. XRN2/RAT1 subfamily. As to expression, expressed in roots, leaves, stems and flowers.

Its subcellular location is the nucleus. Functionally, possesses 5'-&gt;3' exoribonuclease activity. Acts as an endogenous post-transcriptional gene silencing (PTGS) suppressor. Degrades miRNA-derived loops, excised during miRNA maturation in the nucleus. Involved in pre-rRNA processing. Involved in the primary exonucleolytic shortening of the 5' external transcribed spacer (5'ETS), required for endonucleolytic processing at site P by the U3 snoRNP complex. Involved with XRN3 in the 5'-end processing of 5.8S and 25S rRNAs. Contributes with XRN3 to polyadenylation-dependent nuclear RNA surveillance. Involved in the degradation of aberrant polyadenylated pre-rRNA through 5'-end processing. The chain is 5'-3' exoribonuclease 2 from Arabidopsis thaliana (Mouse-ear cress).